A 179-amino-acid chain; its full sequence is Probable chorismate pyruvate-lyase (179 aa).

3 residues coordinate substrate: arginine 82, leucine 120, and glutamate 165.

This sequence belongs to the UbiC family.

The protein resides in the cytoplasm. The catalysed reaction is chorismate = 4-hydroxybenzoate + pyruvate. The protein operates within cofactor biosynthesis; ubiquinone biosynthesis. Its function is as follows. Removes the pyruvyl group from chorismate, with concomitant aromatization of the ring, to provide 4-hydroxybenzoate (4HB) for the ubiquinone pathway. The polypeptide is Probable chorismate pyruvate-lyase (Vibrio vulnificus (strain YJ016)).